Consider the following 89-residue polypeptide: Small ribosomal subunit protein uS14A (89 aa).

The protein belongs to the universal ribosomal protein uS14 family. Part of the 30S ribosomal subunit. Contacts proteins S3 and S10.

Its function is as follows. Binds 16S rRNA, required for the assembly of 30S particles and may also be responsible for determining the conformation of the 16S rRNA at the A site. The protein is Small ribosomal subunit protein uS14A of Lactococcus lactis subsp. lactis (strain IL1403) (Streptococcus lactis).